The following is a 24-amino-acid chain: Brevinin-1Pd (24 aa).

Cysteines 18 and 24 form a disulfide.

As to expression, expressed by the skin glands.

The protein resides in the secreted. Its function is as follows. Antibacterial activity against Gram-positive bacterium S.aureus and Gram-negative bacterium E.coli. Has activity against C.albicans. The polypeptide is Brevinin-1Pd (Lithobates pipiens (Northern leopard frog)).